We begin with the raw amino-acid sequence, 113 residues long: U11-theraphotoxin-Hhn1j (113 aa).

Residues 1–21 form the signal peptide; it reads MNTVRVTFLLVFVLAVSLGQA. Positions 22-74 are excised as a propeptide; sequence DKDENRMEMQEKTEQGKSYLDFAENLLLQKLEELEAKLLEEDSEESRNSRQKR. Residues 60 to 69 show a composition bias toward basic and acidic residues; that stretch reads LEEDSEESRN. Residues 60-83 form a disordered region; that stretch reads LEEDSEESRNSRQKRCIGEGVPCD. 3 disulfide bridges follow: Cys75–Cys90, Cys82–Cys95, and Cys89–Cys110.

This sequence belongs to the neurotoxin 14 (magi-1) family. 01 (HNTX-16) subfamily. In terms of tissue distribution, expressed by the venom gland.

The protein resides in the secreted. Functionally, probable ion channel inhibitor. This is U11-theraphotoxin-Hhn1j from Cyriopagopus hainanus (Chinese bird spider).